Consider the following 462-residue polypeptide: Cysteine--tRNA ligase (462 aa).

Residue cysteine 28 participates in Zn(2+) binding. Positions 30 to 40 match the 'HIGH' region motif; that stretch reads VTIYDLCHIGH. Zn(2+) is bound by residues cysteine 211, histidine 236, and glutamate 240. The 'KMSKS' region signature appears at 268-272; the sequence is KMSKS. Residue lysine 271 coordinates ATP.

This sequence belongs to the class-I aminoacyl-tRNA synthetase family. Monomer. It depends on Zn(2+) as a cofactor.

It is found in the cytoplasm. It carries out the reaction tRNA(Cys) + L-cysteine + ATP = L-cysteinyl-tRNA(Cys) + AMP + diphosphate. The chain is Cysteine--tRNA ligase from Aliivibrio salmonicida (strain LFI1238) (Vibrio salmonicida (strain LFI1238)).